The chain runs to 1134 residues: Vinculin (1134 aa).

The tract at residues 1-835 is N-terminal globular head; it reads MPVFHTRTIE…GAVAKVREAF (835 aa). Ser97 bears the Phosphoserine mark. The interval 168–208 is talin-interaction; it reads MTKMAKMIDERQQELTHQEHRVMLVNSMNTVKELLPVLISA. The residue at position 173 (Lys173) is an N6-acetyllysine. 3 tandem repeats follow at residues 259–369, 370–479, and 480–589. Positions 259-589 are 3 X 112 AA tandem repeats; sequence ASKDTEAMKR…LKDLKARMQE (331 aa). Residues Ser260, Ser272, Ser275, Ser288, Ser290, Ser346, and Ser434 each carry the phosphoserine modification. N6-acetyllysine is present on Lys496. Tyr537 is subject to Phosphotyrosine. Residues Ser574, Ser579, and Ser600 each carry the phosphoserine modification. A phosphothreonine mark is found at Thr604 and Thr672. At Ser721 the chain carries Phosphoserine. An interaction with ACTN4 region spans residues 741-764; that stretch reads MANIQPQMLVAGATSIARRANRIL. Ser795 and Ser809 each carry phosphoserine. Position 822 is a phosphotyrosine (Tyr822). The tract at residues 836 to 878 is linker (Pro-rich); that stretch reads QPQEPDFPPPPPDLEQLRLTDELAPPKPPLPEGEVPPPRPPPP. The tract at residues 857–887 is disordered; it reads ELAPPKPPLPEGEVPPPRPPPPEEKDEEFPE. The segment covering 860–876 has biased composition (pro residues); that stretch reads PPKPPLPEGEVPPPRPP. The C-terminal tail stretch occupies residues 879 to 1134; the sequence is EEKDEEFPEQ…RWVRKTPWYQ (256 aa). 2 facilitates phospholipid membrane insertion regions span residues 1003 to 1046 and 1120 to 1134; these read RLVR…KRIR and AGFTLRWVRKTPWYQ. Tyr1133 is subject to Phosphotyrosine; by SRC-type Tyr-kinases.

The protein belongs to the vinculin/alpha-catenin family. Exhibits self-association properties. Part of a complex composed of THSD1, PTK2/FAK1, TLN1 and VCL. Interacts with APBB1IP and NRAP. Interacts with TLN1. Interacts with CTNNB1 and this interaction is necessary for its localization to the cell-cell junctions and for its function in regulating cell surface expression of E-cadherin. Interacts with SYNM. Interacts with SORBS1. Interacts with CTNNA1. Binds to ACTN4; this interaction triggers conformational changes. Interacts with FLII. As to quaternary structure, (Microbial infection) Interacts via its globular head domain with the central portion of S.flexneri IcsA (also called VirG). Phosphorylated; on serines, threonines and tyrosines. Phosphorylation on Tyr-1133 in activated platelets affects head-tail interactions and cell spreading but has no effect on actin binding nor on localization to focal adhesion plaques. Post-translationally, acetylated; mainly by myristic acid but also by a small amount of palmitic acid. In terms of tissue distribution, metavinculin is muscle-specific.

It localises to the cell membrane. It is found in the cell junction. Its subcellular location is the adherens junction. The protein localises to the focal adhesion. The protein resides in the cytoplasm. It localises to the cytoskeleton. It is found in the sarcolemma. Its subcellular location is the cell projection. The protein localises to the podosome. Its function is as follows. Actin filament (F-actin)-binding protein involved in cell-matrix adhesion and cell-cell adhesion. Regulates cell-surface E-cadherin expression and potentiates mechanosensing by the E-cadherin complex. May also play important roles in cell morphology and locomotion. The protein is Vinculin (VCL) of Homo sapiens (Human).